A 217-amino-acid chain; its full sequence is MNIVLMGLPGAGKGTQADKIVEKYAIPHISTGDMFRAAIKEGTELGLQAKSFMDQGALVPDEVTIGIVRERLAKPDCEKGFLLDGFPRTVPQAEALDSILADLGKAIEHTLNIQVEKDELIARLSGRRICKTCGASYHLIFNPPAEEGKCDKDGGELYTRADDNPDTVANRLEVNMKQAQPLLDFYQAKGVLTNIDGQQDINKVFADLDALLQSSRS.

Residue 10 to 15 (GAGKGT) coordinates ATP. The tract at residues 30–59 (STGDMFRAAIKEGTELGLQAKSFMDQGALV) is NMP. AMP contacts are provided by residues T31, R36, 57 to 59 (ALV), 85 to 88 (GFPR), and Q92. Residues 126–163 (GRRICKTCGASYHLIFNPPAEEGKCDKDGGELYTRADD) form an LID region. R127 provides a ligand contact to ATP. Positions 130 and 133 each coordinate Zn(2+). An ATP-binding site is contributed by 136–137 (SY). Positions 150 and 153 each coordinate Zn(2+). 2 residues coordinate AMP: R160 and R171. Q199 serves as a coordination point for ATP.

It belongs to the adenylate kinase family. As to quaternary structure, monomer.

Its subcellular location is the cytoplasm. The catalysed reaction is AMP + ATP = 2 ADP. Its pathway is purine metabolism; AMP biosynthesis via salvage pathway; AMP from ADP: step 1/1. Functionally, catalyzes the reversible transfer of the terminal phosphate group between ATP and AMP. Plays an important role in cellular energy homeostasis and in adenine nucleotide metabolism. The sequence is that of Adenylate kinase from Lysinibacillus sphaericus (strain C3-41).